Here is a 147-residue protein sequence, read N- to C-terminus: Prefoldin subunit alpha (147 aa).

The protein belongs to the prefoldin alpha subunit family. In terms of assembly, heterohexamer of two alpha and four beta subunits.

The protein resides in the cytoplasm. Molecular chaperone capable of stabilizing a range of proteins. Seems to fulfill an ATP-independent, HSP70-like function in archaeal de novo protein folding. The chain is Prefoldin subunit alpha from Saccharolobus islandicus (strain M.16.27) (Sulfolobus islandicus).